The sequence spans 383 residues: Caspase a (383 aa).

Positions 1–142 (MAKSIKDHLQ…ETYEIKDKSV (142 aa)) are excised as a propeptide. The Pyrin domain occupies 8 to 81 (HLQDALSNIG…RGIKCNAVAE (74 aa)). Residues 87–106 (TGQGGVSQPEPPVPEPIPKD) form a disordered region. Active-site residues include His-220 and Cys-270. Positions 275-296 (HGRVWASDGEPDEPIEIEDDDF) are excised as a propeptide.

This sequence belongs to the peptidase C14A family. Heterotetramer that consists of two anti-parallel arranged heterodimers, each one formed by a 20 kDa (p20) and a 10 kDa (p10) subunit. Interacts (via pyrin domain) with pycard (via pyrin domain). Interacts with caspb. Component of NLRP1 inflammasomes. Inflammasomes are supramolecular complexes that assemble in the cytosol in response to pathogens and other damage-associated signals and play critical roles in innate immunity and inflammation. The NLRP1 inflammasome is composed of the signal sensor nlrp1, and the adapter pycard (asc), which recruit effector pro-inflammatory caspases caspa and/or caspb. The interaction between nlrp1 and pycard is required for the sequential recruitment of caspa and then caspb. Caspa is preferentially recruited first and this causes the cleavage of pro-il1b into the midformed il1b. This is followed by the recruitment of caspb, which is activated and cleaves the midformed il1b resulting in il1b maturation. Interacts with caiap. The two subunits are derived from the precursor sequence by an autocatalytic mechanism.

It localises to the inflammasome. The protein resides in the cytoplasm. It catalyses the reaction Strict requirement for an Asp residue at position P1 and has a preferred cleavage sequence of Tyr-Val-Ala-Asp-|-.. Functionally, thiol protease which cleaves IL-1 beta (il1b), releasing the mature cytokine which is involved in a variety of inflammatory processes, and mediates apoptosis. Component of the NLRP1 inflammasome, which plays a crucial role in innate immunity and inflammation. In response to pathogens and other damage-associated signals, recruited to the NLRP1 inflammasome in its precursor form. Its subsequent activation causes the cleavage of pro-il1b into the midformed il1b, which then evetually leads to il1b maturation and secretion in the extracellular milieu. Required for the development of the cartilaginous pharyngeal skeleton. The chain is Caspase a from Danio rerio (Zebrafish).